The sequence spans 126 residues: CD59 glycoprotein (126 aa).

Residues 1–25 (MGIQGGSVLFGLLLALAVFCHSGHS) form the signal peptide. Positions 26–106 (LQCYNCPNPT…QLENGGTSLS (81 aa)) constitute a UPAR/Ly6 domain. Disulfide bonds link C28–C51, C31–C38, C44–C64, C70–C88, and C89–C94. N43 is a glycosylation site (N-linked (GlcNAc...) asparagine). The GPI-anchor amidated asparagine moiety is linked to residue N100. Positions 101-126 (GGTSLSEKTVLLLVTPLLAAAWCLHP) are cleaved as a propeptide — removed in mature form.

As to quaternary structure, interacts with T-cell surface antigen CD2. N- and O-glycosylated.

It localises to the cell membrane. It is found in the secreted. Potent inhibitor of the complement membrane attack complex (MAC) action, which protects self-cells from damage during complement activation. Acts by binding to the beta-haipins of C8 (C8A and C8B) components of the assembling MAC, forming an intermolecular beta-sheet that prevents incorporation of the multiple copies of C9 required for complete formation of the osmolytic pore. This Papio sp. (Baboon) protein is CD59 glycoprotein.